A 325-amino-acid polypeptide reads, in one-letter code: Tetraacyldisaccharide 4'-kinase (325 aa).

53-60 (SVGGNGKT) lines the ATP pocket.

It belongs to the LpxK family.

It carries out the reaction a lipid A disaccharide + ATP = a lipid IVA + ADP + H(+). It functions in the pathway glycolipid biosynthesis; lipid IV(A) biosynthesis; lipid IV(A) from (3R)-3-hydroxytetradecanoyl-[acyl-carrier-protein] and UDP-N-acetyl-alpha-D-glucosamine: step 6/6. Functionally, transfers the gamma-phosphate of ATP to the 4'-position of a tetraacyldisaccharide 1-phosphate intermediate (termed DS-1-P) to form tetraacyldisaccharide 1,4'-bis-phosphate (lipid IVA). The protein is Tetraacyldisaccharide 4'-kinase of Pasteurella multocida (strain Pm70).